The primary structure comprises 211 residues: Major fimbrial subunit (211 aa).

An N-terminal signal peptide occupies residues 1-20 (MKKTLLGSLILLAFAGNVQA). Cysteines 43 and 83 form a disulfide.

It belongs to the fimbrial protein family.

Its subcellular location is the fimbrium. Its function is as follows. Mediates adherence to oropharyngeal epithelial cells. Helps the airway colonization process. This is Major fimbrial subunit (hifA) from Haemophilus influenzae.